A 410-amino-acid polypeptide reads, in one-letter code: Peptidase T (410 aa).

His-79 is a binding site for Zn(2+). The active site involves Asp-81. Asp-142 lines the Zn(2+) pocket. The Proton acceptor role is filled by Glu-176. Residues Glu-177, Asp-199, and His-381 each contribute to the Zn(2+) site.

This sequence belongs to the peptidase M20B family. Requires Zn(2+) as cofactor.

It is found in the cytoplasm. The catalysed reaction is Release of the N-terminal residue from a tripeptide.. Its function is as follows. Cleaves the N-terminal amino acid of tripeptides. The polypeptide is Peptidase T (Brevibacillus brevis (strain 47 / JCM 6285 / NBRC 100599)).